The primary structure comprises 185 residues: Lysozyme g (185 aa).

2 disulfides stabilise this stretch: Cys-4–Cys-60 and Cys-18–Cys-29. Residue Glu-73 is part of the active site.

Belongs to the glycosyl hydrolase 23 family.

It is found in the secreted. It catalyses the reaction Hydrolysis of (1-&gt;4)-beta-linkages between N-acetylmuramic acid and N-acetyl-D-glucosamine residues in a peptidoglycan and between N-acetyl-D-glucosamine residues in chitodextrins.. The chain is Lysozyme g from Cygnus atratus (Black swan).